The primary structure comprises 489 residues: DBIRD complex subunit ZNF326 (489 aa).

Disordered regions lie at residues 1-28 (MDRE…EMGD), 62-100 (EQGH…PSFT), 133-181 (VGSR…RPGL), and 205-263 (PPFK…KNSE). Over residues 7–22 (SYNQRSMDSYGNQSYS) the composition is skewed to polar residues. Over residues 62-76 (EQGHFGDSYDGRYEN) the composition is skewed to basic and acidic residues. Positions 91-100 (GGSSWDPSFT) are enriched in polar residues. Residues 200-221 (KRKMAPPFKPVGVFGKKQKLSK) carry the Bipartite nuclear localization signal motif. 2 C2H2 AKAP95-type zinc fingers span residues 273–295 (CSFC…STTH) and 365–388 (CSAC…SADH). A disordered region spans residues 431 to 489 (ETQPEEQQQEQEEEEEEEEQQEQAAVPEQDLSEEQPAAIAAEPEGEDFTCDPLTTTDEV). A compositionally biased stretch (acidic residues) spans 433-451 (QPEEQQQEQEEEEEEEEQQ).

Belongs to the AKAP95 family. In terms of assembly, component of the DBIRD complex.

The protein resides in the nucleus. Its function is as follows. Core component of the DBIRD complex, a multiprotein complex that acts at the interface between core mRNP particles and RNA polymerase II (RNAPII) and integrates transcript elongation with the regulation of alternative splicing. This is DBIRD complex subunit ZNF326 (znf326) from Xenopus tropicalis (Western clawed frog).